Here is a 472-residue protein sequence, read N- to C-terminus: Dihydrolipoyl dehydrogenase 2 (472 aa).

FAD-binding positions include 39–47, K56, and A118; that span reads ERDAYGGTC. An intrachain disulfide couples C47 to C52. NAD(+)-binding positions include 186-190, E209, and 275-278; these read GAGYI and AVGR. 2 residues coordinate FAD: D318 and A326. H450 serves as the catalytic Proton acceptor.

It belongs to the class-I pyridine nucleotide-disulfide oxidoreductase family. In terms of assembly, homodimer. It depends on FAD as a cofactor.

The protein resides in the cytoplasm. It carries out the reaction N(6)-[(R)-dihydrolipoyl]-L-lysyl-[protein] + NAD(+) = N(6)-[(R)-lipoyl]-L-lysyl-[protein] + NADH + H(+). This chain is Dihydrolipoyl dehydrogenase 2 (lpdA2), found in Haloarcula marismortui (strain ATCC 43049 / DSM 3752 / JCM 8966 / VKM B-1809) (Halobacterium marismortui).